A 399-amino-acid chain; its full sequence is Accessory Sec system protein translocase subunit SecY2 (399 aa).

10 helical membrane-spanning segments follow: residues 14–34 (IFFT…SIVS), 60–80 (LNIF…LTLI), 102–122 (ALTL…YINK), 128–148 (SNML…VWLA), 152–172 (TTYG…KSIF), 183–203 (ASLI…LFFI), 237–257 (ISIM…NFIG), 272–292 (FTNP…GYFL), 335–355 (WFGS…ALLV), and 362–382 (VYFT…AETI).

This sequence belongs to the SecY/SEC61-alpha family. SecY2 subfamily. As to quaternary structure, component of the accessory SecA2/SecY2 protein translocase complex required to export cell wall proteins. May form heterotrimers with SecE and SecG subunits.

Its subcellular location is the cell membrane. Functionally, part of the accessory SecA2/SecY2 system specifically required for export of possible cell wall proteins. The central subunit of a protein translocation channel. The polypeptide is Accessory Sec system protein translocase subunit SecY2 (Staphylococcus epidermidis (strain ATCC 12228 / FDA PCI 1200)).